The following is a 644-amino-acid chain: 2-isopropylmalate synthase (644 aa).

A disordered region spans residues 1 to 40 (MTTSESPDAYTESFGAHTIVKPAGPPRVGQPSWNPQRASS). The span at 31 to 40 (PSWNPQRASS) shows a compositional bias: polar residues. Residues 72–346 (PLWCAVDLRD…DPQIDFSNID (275 aa)) enclose the Pyruvate carboxyltransferase domain. Residues Asp-81, His-285, His-287, and Asn-321 each coordinate Mg(2+). The segment at 491-644 (PVRPLERIRQ…VVSAVNRAAR (154 aa)) is regulatory domain. The VNTR1 repeat unit spans residues 575-593 (VTIASPAQPGEAGRHASDP). The interval 581-612 (AQPGEAGRHASDPVTIASPAQPGEAGRHASDP) is disordered. Residues 594 to 612 (VTIASPAQPGEAGRHASDP) form a VNTR2 repeat.

The protein belongs to the alpha-IPM synthase/homocitrate synthase family. LeuA type 2 subfamily. In terms of assembly, homodimer. The cofactor is Mg(2+).

It is found in the cytoplasm. It carries out the reaction 3-methyl-2-oxobutanoate + acetyl-CoA + H2O = (2S)-2-isopropylmalate + CoA + H(+). Its pathway is amino-acid biosynthesis; L-leucine biosynthesis; L-leucine from 3-methyl-2-oxobutanoate: step 1/4. In terms of biological role, catalyzes the condensation of the acetyl group of acetyl-CoA with 3-methyl-2-oxobutanoate (2-ketoisovalerate) to form 3-carboxy-3-hydroxy-4-methylpentanoate (2-isopropylmalate). The polypeptide is 2-isopropylmalate synthase (Mycobacterium tuberculosis (strain CDC 1551 / Oshkosh)).